The chain runs to 863 residues: Protein ARG5,6, mitochondrial (863 aa).

The N-terminal 65 residues, 1–65 (MPSASLLVST…RYVSSTNGFS (65 aa)), are a transit peptide targeting the mitochondrion. The N-acetyltransferase domain occupies 353 to 505 (KLVKRSSIGE…NFVKSCDTAS (153 aa)). Serine 359 carries the post-translational modification Phosphoserine. The active site involves cysteine 675.

This sequence in the N-terminal section; belongs to the acetylglutamate kinase family. It in the C-terminal section; belongs to the NAGSA dehydrogenase family. The protein precursor is cleaved into the two biologically active enzymes, the kinase and the reductase.

The protein localises to the mitochondrion. It catalyses the reaction N-acetyl-L-glutamate 5-semialdehyde + phosphate + NADP(+) = N-acetyl-L-glutamyl 5-phosphate + NADPH + H(+). The enzyme catalyses N-acetyl-L-glutamate + ATP = N-acetyl-L-glutamyl 5-phosphate + ADP. Its pathway is amino-acid biosynthesis; L-arginine biosynthesis; N(2)-acetyl-L-ornithine from L-glutamate: step 2/4. It participates in amino-acid biosynthesis; L-arginine biosynthesis; N(2)-acetyl-L-ornithine from L-glutamate: step 3/4. The kinase activity is inhibited by arginine. The polypeptide is Protein ARG5,6, mitochondrial (ARG5,6) (Saccharomyces cerevisiae (strain ATCC 204508 / S288c) (Baker's yeast)).